The chain runs to 129 residues: Protein BEX2 (129 aa).

The tract at residues methionine 1–isoleucine 37 is disordered. Residues glutamate 15–proline 36 are compositionally biased toward basic and acidic residues. Arginine 51 is modified (omega-N-methylarginine). Positions histidine 118 to histidine 122 are his cluster. Cysteine 126 serves as a coordination point for Zn(2+).

Belongs to the BEX family. Interacts with LMO2, possibly leading to regulate the transcriptional activity of a DNA-binding complex containing LMO2. Interacts with OMP. Primarily localized to neuronal cells within several regions of the brain, including the olfactory epithelium, bulb, peri/paraventricular nuclei, suprachiasmatic nucleus, arcuate nucleus, median eminence, lateral hypothalamic area, thalamus, hippocampus and cerebellum (at protein level).

The protein localises to the cytoplasm. Its subcellular location is the nucleus. Functionally, regulator of mitochondrial apoptosis and G1 cell cycle. Regulates the level of PP2A regulatory subunit B and PP2A phosphatase activity. In absence of reductive stress, acts as a pseudosubstrate for the CRL2(FEM1B) complex: associates with FEM1B via zinc, thereby preventing association between FEM1B and its substrates. In Mus musculus (Mouse), this protein is Protein BEX2.